A 281-amino-acid polypeptide reads, in one-letter code: Feruloyl esterase A (281 aa).

The first 21 residues, 1–21, serve as a signal peptide directing secretion; sequence MKQFSAKYALILLATAGQALA. 3 disulfides stabilise this stretch: Cys-50-Cys-279, Cys-112-Cys-115, and Cys-248-Cys-255. Asp-98 serves as a coordination point for substrate. N-linked (GlcNAc...) asparagine glycosylation is present at Asn-100. Substrate is bound at residue Tyr-101. Catalysis depends on Ser-154, which acts as the Nucleophile. The active-site Charge relay system is the Asp-215. Position 268 (His-268) interacts with substrate. His-268 (charge relay system) is an active-site residue.

Glycosylated.

It is found in the secreted. It carries out the reaction feruloyl-polysaccharide + H2O = ferulate + polysaccharide.. With respect to regulation, inhibited by the specific serine esterase inhibitor diisopropylfluorophosphate. Its function is as follows. Involved in degradation of plant cell walls. Hydrolyzes the feruloyl-arabinose ester bond in arabinoxylans, and the feruloyl-galactose ester bond in pectin. Binds to cellulose. The sequence is that of Feruloyl esterase A (faeA) from Aspergillus niger.